A 159-amino-acid chain; its full sequence is Protein-export protein SecB (159 aa).

The protein belongs to the SecB family. As to quaternary structure, homotetramer, a dimer of dimers. One homotetramer interacts with 1 SecA dimer.

It localises to the cytoplasm. Functionally, one of the proteins required for the normal export of preproteins out of the cell cytoplasm. It is a molecular chaperone that binds to a subset of precursor proteins, maintaining them in a translocation-competent state. It also specifically binds to its receptor SecA. In Marinomonas sp. (strain MWYL1), this protein is Protein-export protein SecB.